The chain runs to 626 residues: Elongation factor 4 (626 aa).

In terms of domain architecture, tr-type G spans 14 to 195 (SVIRNFCIIA…QIVMDVPAPH (182 aa)). Residues 26–31 (DHGKST) and 142–145 (NKID) each bind GTP. Residues 603–626 (LSTGEDSNDRDTKDKIRAAQKTEG) form a disordered region. Residues 609–626 (SNDRDTKDKIRAAQKTEG) are compositionally biased toward basic and acidic residues.

It belongs to the TRAFAC class translation factor GTPase superfamily. Classic translation factor GTPase family. LepA subfamily.

Its subcellular location is the cell membrane. The catalysed reaction is GTP + H2O = GDP + phosphate + H(+). Required for accurate and efficient protein synthesis under certain stress conditions. May act as a fidelity factor of the translation reaction, by catalyzing a one-codon backward translocation of tRNAs on improperly translocated ribosomes. Back-translocation proceeds from a post-translocation (POST) complex to a pre-translocation (PRE) complex, thus giving elongation factor G a second chance to translocate the tRNAs correctly. Binds to ribosomes in a GTP-dependent manner. This chain is Elongation factor 4, found in Bifidobacterium longum subsp. infantis (strain ATCC 15697 / DSM 20088 / JCM 1222 / NCTC 11817 / S12).